Reading from the N-terminus, the 393-residue chain is S-adenosylmethionine synthase (393 aa).

An ATP-binding site is contributed by histidine 17. A Mg(2+)-binding site is contributed by aspartate 19. Position 45 (glutamate 45) interacts with K(+). Positions 58 and 106 each coordinate L-methionine. The segment at glutamine 106 to alanine 116 is flexible loop. Residues aspartate 171–lysine 173, lysine 237–phenylalanine 238, aspartate 246, arginine 252–lysine 253, alanine 269, and lysine 273 contribute to the ATP site. An L-methionine-binding site is contributed by aspartate 246. An L-methionine-binding site is contributed by lysine 277.

The protein belongs to the AdoMet synthase family. As to quaternary structure, homotetramer; dimer of dimers. Mg(2+) serves as cofactor. It depends on K(+) as a cofactor.

It localises to the cytoplasm. The enzyme catalyses L-methionine + ATP + H2O = S-adenosyl-L-methionine + phosphate + diphosphate. The protein operates within amino-acid biosynthesis; S-adenosyl-L-methionine biosynthesis; S-adenosyl-L-methionine from L-methionine: step 1/1. In terms of biological role, catalyzes the formation of S-adenosylmethionine (AdoMet) from methionine and ATP. The overall synthetic reaction is composed of two sequential steps, AdoMet formation and the subsequent tripolyphosphate hydrolysis which occurs prior to release of AdoMet from the enzyme. The polypeptide is S-adenosylmethionine synthase (Jannaschia sp. (strain CCS1)).